Consider the following 645-residue polypeptide: Acetyl-coenzyme A synthetase (645 aa).

CoA-binding positions include 190–193 (RGSK), Thr-308, and Asn-332. ATP contacts are provided by residues 384 to 386 (GEP), 408 to 413 (DTWWQT), Asp-497, and Arg-512. Residue Ser-520 coordinates CoA. Arg-523 contacts ATP. Residues Val-534, His-536, and Val-539 each contribute to the Mg(2+) site. Arg-581 contacts CoA. Lys-606 bears the N6-acetyllysine mark.

It belongs to the ATP-dependent AMP-binding enzyme family. The cofactor is Mg(2+). In terms of processing, acetylated. Deacetylation by the SIR2-homolog deacetylase activates the enzyme.

The catalysed reaction is acetate + ATP + CoA = acetyl-CoA + AMP + diphosphate. Catalyzes the conversion of acetate into acetyl-CoA (AcCoA), an essential intermediate at the junction of anabolic and catabolic pathways. AcsA undergoes a two-step reaction. In the first half reaction, AcsA combines acetate with ATP to form acetyl-adenylate (AcAMP) intermediate. In the second half reaction, it can then transfer the acetyl group from AcAMP to the sulfhydryl group of CoA, forming the product AcCoA. The sequence is that of Acetyl-coenzyme A synthetase from Bdellovibrio bacteriovorus (strain ATCC 15356 / DSM 50701 / NCIMB 9529 / HD100).